The following is a 208-amino-acid chain: Protein-L-isoaspartate O-methyltransferase (208 aa).

S59 is an active-site residue.

It belongs to the methyltransferase superfamily. L-isoaspartyl/D-aspartyl protein methyltransferase family.

It localises to the cytoplasm. The catalysed reaction is [protein]-L-isoaspartate + S-adenosyl-L-methionine = [protein]-L-isoaspartate alpha-methyl ester + S-adenosyl-L-homocysteine. In terms of biological role, catalyzes the methyl esterification of L-isoaspartyl residues in peptides and proteins that result from spontaneous decomposition of normal L-aspartyl and L-asparaginyl residues. It plays a role in the repair and/or degradation of damaged proteins. This is Protein-L-isoaspartate O-methyltransferase from Pectobacterium carotovorum subsp. carotovorum (strain PC1).